A 188-amino-acid chain; its full sequence is Pro-FMRFamide-related neuropeptide VF (188 aa).

An N-terminal signal peptide occupies residues 1-26; it reads MEIISLKRFILLTVATSSFLTSNTFC. A propeptide spanning residues 27 to 57 is cleaved from the precursor; that stretch reads TDEFMMPHFHSKEGDGKYSQLRGIPKGEKER. Phenylalanine 94 bears the Phenylalanine amide mark. Positions 97–106 are excised as a propeptide; it reads TIDEKRSPAA. 2 disordered regions span residues 116-144 and 163-188; these read SHFP…QKPL and IQSP…KPEK. Phenylalanine 125 carries the phenylalanine amide modification. A propeptide spanning residues 128–188 is cleaved from the precursor; sequence TTARSPKTPA…TDDAERKPEK (61 aa).

It belongs to the FARP (FMRFamide related peptide) family.

The protein localises to the secreted. Functionally, efficiently inhibits forskolin-induced production of cAMP. Acts as a potent negative regulator of gonadotropin synthesis and secretion. Induces secretion of prolactin. In terms of biological role, efficiently inhibits forskolin-induced production of cAMP. Blocks morphine-induced analgesia. This is Pro-FMRFamide-related neuropeptide VF (Npvf) from Mus musculus (Mouse).